The primary structure comprises 373 residues: Putative protein YfkA (373 aa).

The region spanning 26 to 256 is the Radical SAM core domain; it reads YGDMQLTNVE…DIRDENTWML (231 aa). 3 residues coordinate [4Fe-4S] cluster: cysteine 42, cysteine 46, and cysteine 49.

This sequence belongs to the radical SAM superfamily. It depends on [4Fe-4S] cluster as a cofactor.

The chain is Putative protein YfkA (yfkA) from Bacillus subtilis (strain 168).